The following is a 196-amino-acid chain: MSYYAFEGLIPVVHPTAFVHPSAVLIGDVIVGAGVYIGPLASLRGDYGRLIVQAGANIQDGCIMHGYCDTDTIVGENGHIGHGAILHGCVIGRDALVGMNSVIMDGAVIGEESIVAAISFVKAGFRGEKRQLLMGTPARAVRNVSDDELHWKRLNTKEYQDLVGRCHASLHETQPLRQMEENRPRLQGTTDVTPKR.

Residues 173-196 are disordered; that stretch reads TQPLRQMEENRPRLQGTTDVTPKR. The segment covering 187-196 has biased composition (polar residues); the sequence is QGTTDVTPKR.

This sequence belongs to the transferase hexapeptide repeat family.

The protein operates within amine and polyamine metabolism; carnitine metabolism. Functionally, overproduction of CaiE stimulates the activity of CaiB and CaiD. This is Carnitine operon protein CaiE from Escherichia coli O7:K1 (strain IAI39 / ExPEC).